Consider the following 277-residue polypeptide: MVVKIGIIKCGNIGMSPLIDLALDERADRTNIDVISIGSGAKMGPNQVVEVTTKMVEDIKPDFIIYVGPNPAAPGPAKAREILSASDIPSVIIGDAPGIKAKDKMAEEGLGYILIKCDPMIGARRQFLDPVEMAMFNADVIRVLAGTGAARVVQNAIDDIVEAIEAGNEIELPKIVVTDAKSVAAAEFSNPYAKAKAMAAFAMAEQVANIDVKGCFMTKEMEKYIPIVASAHEMIRTAAKLVDEARELEKATDSVSRKPHGADGKRLNKTKLMEKPE.

The tract at residues 249 to 277 (EKATDSVSRKPHGADGKRLNKTKLMEKPE) is disordered.

Belongs to the MTD family.

The catalysed reaction is 5,10-methylenetetrahydromethanopterin + oxidized coenzyme F420-(gamma-L-Glu)(n) + 2 H(+) = 5,10-methenyl-5,6,7,8-tetrahydromethanopterin + reduced coenzyme F420-(gamma-L-Glu)(n). Its pathway is one-carbon metabolism; methanogenesis from CO(2); 5,10-methylene-5,6,7,8-tetrahydromethanopterin from 5,10-methenyl-5,6,7,8-tetrahydromethanopterin (coenzyme F420 route): step 1/1. Its function is as follows. Catalyzes the reversible reduction of methenyl-H(4)MPT(+) to methylene-H(4)MPT. The sequence is that of F420-dependent methylenetetrahydromethanopterin dehydrogenase from Methanococcus aeolicus (strain ATCC BAA-1280 / DSM 17508 / OCM 812 / Nankai-3).